A 351-amino-acid polypeptide reads, in one-letter code: N-acetyl-gamma-glutamyl-phosphate reductase (351 aa).

The active site involves C154.

Belongs to the NAGSA dehydrogenase family. Type 1 subfamily.

It localises to the cytoplasm. The catalysed reaction is N-acetyl-L-glutamate 5-semialdehyde + phosphate + NADP(+) = N-acetyl-L-glutamyl 5-phosphate + NADPH + H(+). The protein operates within amino-acid biosynthesis; L-arginine biosynthesis; N(2)-acetyl-L-ornithine from L-glutamate: step 3/4. In terms of biological role, catalyzes the NADPH-dependent reduction of N-acetyl-5-glutamyl phosphate to yield N-acetyl-L-glutamate 5-semialdehyde. The sequence is that of N-acetyl-gamma-glutamyl-phosphate reductase from Prochlorococcus marinus (strain MIT 9215).